The primary structure comprises 223 residues: N-terminal Xaa-Pro-Lys N-methyltransferase 1 (223 aa).

Residues Gly-69, Arg-74, 91 to 93, 119 to 120, and Gln-135 each bind S-adenosyl-L-methionine; these read DVT and LQ.

The protein belongs to the methyltransferase superfamily. NTM1 family.

The protein resides in the nucleus. It catalyses the reaction N-terminal L-alanyl-L-prolyl-L-lysyl-[protein] + 3 S-adenosyl-L-methionine = N-terminal N,N,N-trimethyl-L-alanyl-L-prolyl-L-lysyl-[protein] + 3 S-adenosyl-L-homocysteine + 3 H(+). It carries out the reaction N-terminal L-seryl-L-prolyl-L-lysyl-[protein] + 3 S-adenosyl-L-methionine = N-terminal N,N,N-trimethyl-L-seryl-L-prolyl-L-lysyl-[protein] + 3 S-adenosyl-L-homocysteine + 3 H(+). The enzyme catalyses N-terminal L-prolyl-L-prolyl-L-lysyl-[protein] + 2 S-adenosyl-L-methionine = N-terminal N,N-dimethyl-L-prolyl-L-prolyl-L-lysyl-[protein] + 2 S-adenosyl-L-homocysteine + 2 H(+). Functionally, distributive alpha-N-methyltransferase that methylates the N-terminus of target proteins containing the N-terminal motif [Ala/Gly/Pro/Ser]-Pro-Lys when the initiator Met is cleaved. Specifically catalyzes mono-, di- or tri-methylation of the exposed alpha-amino group of the Ala, Gly or Ser residue in the [Ala/Gly/Ser]-Pro-Lys motif and mono- or di-methylation of Pro in the Pro-Pro-Lys motif. Required during mitosis for normal bipolar spindle formation and chromosome segregation via its action on target proteins. The protein is N-terminal Xaa-Pro-Lys N-methyltransferase 1 (ntmt1) of Danio rerio (Zebrafish).